Here is a 225-residue protein sequence, read N- to C-terminus: uncharacterized protein (225 aa).

A helical membrane pass occupies residues 12 to 32 (AGFMMIFVFVIASFLLVLLFF).

It is found in the cell membrane. This is an uncharacterized protein from Bacillus subtilis (strain 168).